A 359-amino-acid chain; its full sequence is 3-dehydroquinate synthase (359 aa).

NAD(+)-binding positions include 71 to 76, 105 to 109, 129 to 130, lysine 142, lysine 151, and 169 to 172; these read DGEAHK, GVIGD, TT, and TLHT. Residues glutamate 184, histidine 247, and histidine 264 each coordinate Zn(2+).

This sequence belongs to the sugar phosphate cyclases superfamily. Dehydroquinate synthase family. Requires NAD(+) as cofactor. Co(2+) is required as a cofactor. The cofactor is Zn(2+).

The protein resides in the cytoplasm. It catalyses the reaction 7-phospho-2-dehydro-3-deoxy-D-arabino-heptonate = 3-dehydroquinate + phosphate. The protein operates within metabolic intermediate biosynthesis; chorismate biosynthesis; chorismate from D-erythrose 4-phosphate and phosphoenolpyruvate: step 2/7. Catalyzes the conversion of 3-deoxy-D-arabino-heptulosonate 7-phosphate (DAHP) to dehydroquinate (DHQ). The protein is 3-dehydroquinate synthase of Neisseria meningitidis serogroup B (strain ATCC BAA-335 / MC58).